Here is a 678-residue protein sequence, read N- to C-terminus: Ribosome biogenesis protein BOP1 homolog (678 aa).

Basic and acidic residues predominate over residues 1-10; it reads MGHSDGDHGS. The tract at residues 1–73 is disordered; the sequence is MGHSDGDHGS…VAPRNTIGDV (73 aa). Positions 24 to 63 are enriched in acidic residues; that stretch reads WSDDDDEGSLSFEDSGEGSDAESDEPDAPAVEESDSSEDE. WD repeat units lie at residues 343-384, 386-424, 463-505, 508-548, 549-588, 592-631, and 647-678; these read GHNG…KVWN, GGVV…EDAQ, IHHK…SHHP, KLPG…KKLE, SGVR…RPYK, NHSK…DLNQ, and SDGR…LYCD.

This sequence belongs to the WD repeat BOP1/ERB1 family.

The protein resides in the nucleus. It localises to the nucleolus. The protein localises to the nucleoplasm. Its function is as follows. Required for maturation of ribosomal RNAs and formation of the large ribosomal subunit. The polypeptide is Ribosome biogenesis protein BOP1 homolog (Oryza sativa subsp. japonica (Rice)).